A 130-amino-acid polypeptide reads, in one-letter code: Small ribosomal subunit protein uS9 (130 aa).

This sequence belongs to the universal ribosomal protein uS9 family.

The protein is Small ribosomal subunit protein uS9 of Nitratidesulfovibrio vulgaris (strain ATCC 29579 / DSM 644 / CCUG 34227 / NCIMB 8303 / VKM B-1760 / Hildenborough) (Desulfovibrio vulgaris).